Reading from the N-terminus, the 118-residue chain is Ribulose bisphosphate carboxylase small subunit (118 aa).

It belongs to the RuBisCO small chain family. Heterohexadecamer of 8 large and 8 small subunits.

Its subcellular location is the carboxysome. Its function is as follows. RuBisCO catalyzes two reactions: the carboxylation of D-ribulose 1,5-bisphosphate, the primary event in carbon dioxide fixation, as well as the oxidative fragmentation of the pentose substrate in the photorespiration process. Both reactions occur simultaneously and in competition at the same active site. Although the small subunit is not catalytic it is essential for maximal activity. In Thermosynechococcus vestitus (strain NIES-2133 / IAM M-273 / BP-1), this protein is Ribulose bisphosphate carboxylase small subunit.